A 329-amino-acid polypeptide reads, in one-letter code: N-acetylmuramoyl-L-alanine amidase sle1 (329 aa).

An N-terminal signal peptide occupies residues 1 to 26 (MNKKILATAVLGTGALSTLFAHQAEA). LysM domains are found at residues 28–71 (TTHT…VLKV), 88–131 (STYT…QLKV), and 152–195 (STYT…KLRV). The Peptidase C51 domain occupies 205-329 (STRSAQSTYY…YQVRNYKFIH (125 aa)).

It localises to the secreted. It is found in the cell surface. It catalyses the reaction Hydrolyzes the link between N-acetylmuramoyl residues and L-amino acid residues in certain cell-wall glycopeptides.. Functionally, peptidoglycan hydrolase involved in the splitting of the septum during cell division. This chain is N-acetylmuramoyl-L-alanine amidase sle1 (sle1), found in Staphylococcus haemolyticus (strain JCSC1435).